Reading from the N-terminus, the 368-residue chain is Zinc finger protein 24 (368 aa).

Lys-22 is covalently cross-linked (Glycyl lysine isopeptide (Lys-Gly) (interchain with G-Cter in SUMO2)). A Glycyl lysine isopeptide (Lys-Gly) (interchain with G-Cter in SUMO1); alternate cross-link involves residue Lys-27. Lys-27 is covalently cross-linked (Glycyl lysine isopeptide (Lys-Gly) (interchain with G-Cter in SUMO2); alternate). The SCAN box domain occupies 52-134 (RQRFRQFGYQ…TVLEDLESEL (83 aa)). Ser-132 and Ser-142 each carry phosphoserine. Residues Lys-147, Lys-177, and Lys-236 each participate in a glycyl lysine isopeptide (Lys-Gly) (interchain with G-Cter in SUMO2) cross-link. Residues 251 to 273 (HICDECGKHFSQGSALILHQRIH) form a C2H2-type 1 zinc finger. The tract at residues 251-301 (HICDECGKHFSQGSALILHQRIHSGEKPYGCVECGKAFSRSSILVQHQRVH) is necessary and sufficient for nuclear localization. A Phosphoserine modification is found at Ser-274. Residues Lys-277 and Lys-286 each participate in a glycyl lysine isopeptide (Lys-Gly) (interchain with G-Cter in SUMO2) cross-link. 3 C2H2-type zinc fingers span residues 279–301 (YGCV…QRVH), 307–329 (YKCL…QRIH), and 335–357 (YECV…XXXH). Ser-292 carries the phosphoserine modification. Tyr-335 is subject to Phosphotyrosine. Residues Lys-361 and Lys-367 each participate in a glycyl lysine isopeptide (Lys-Gly) (interchain with G-Cter in SUMO2) cross-link.

Belongs to the krueppel C2H2-type zinc-finger protein family. Sumoylated.

The protein resides in the nucleus. Functionally, transcription factor required for myelination of differentiated oligodendrocytes. Required for the conversion of oligodendrocytes from the premyelinating to the myelinating state. In the developing central nervous system (CNS), involved in the maintenance in the progenitor stage by promoting the cell cycle. Specifically binds to the 5'-TCAT-3' DNA sequence. Has transcription repressor activity in vitro. In Pan paniscus (Pygmy chimpanzee), this protein is Zinc finger protein 24 (ZNF24).